A 624-amino-acid chain; its full sequence is ATP-dependent RNA helicase MRH4, mitochondrial (624 aa).

Residues 1–43 (MSPVASTCLLCEMRTVVWGWQPAVPQPWHFVRFASSARLARRK) constitute a mitochondrion transit peptide. The tract at residues 41-120 (RRKPARMALS…KDAADKKQDG (80 aa)) is disordered. The span at 86 to 119 (RLPDRPIPRSDAELKRSSSDLNNKEKDAADKKQD) shows a compositional bias: basic and acidic residues. The Q motif motif lies at 151 to 184 (TSFDQFPLLPQVREAVYANAFPTLTEISPTPIQR). The Helicase ATP-binding domain maps to 212–427 (EEELFHFDQF…EKKFPEMKRL (216 aa)). Position 225–232 (225–232 (AETGTGKT)) interacts with ATP. A DEAD box motif is present at residues 374–377 (DEAD). One can recognise a Helicase C-terminal domain in the interval 438-624 (RVQLGVVDVD…EAMFRGQALI (187 aa)).

It belongs to the DEAD box helicase family. MRH4 subfamily.

It is found in the mitochondrion. The enzyme catalyses ATP + H2O = ADP + phosphate + H(+). Functionally, ATP-binding RNA helicase involved in mitochondrial RNA metabolism. Required for maintenance of mitochondrial DNA. This chain is ATP-dependent RNA helicase MRH4, mitochondrial (MRH4), found in Ajellomyces capsulatus (strain NAm1 / WU24) (Darling's disease fungus).